The sequence spans 430 residues: Serine--tRNA ligase (430 aa).

A disordered region spans residues glutamine 41–lysine 60. Residue threonine 236–glutamate 238 coordinates L-serine. Arginine 267–glutamate 269 contacts ATP. An L-serine-binding site is contributed by glutamate 290. Glutamate 354–serine 357 is an ATP binding site. Serine 390 lines the L-serine pocket.

It belongs to the class-II aminoacyl-tRNA synthetase family. Type-1 seryl-tRNA synthetase subfamily. In terms of assembly, homodimer. The tRNA molecule binds across the dimer.

It is found in the cytoplasm. It catalyses the reaction tRNA(Ser) + L-serine + ATP = L-seryl-tRNA(Ser) + AMP + diphosphate + H(+). It carries out the reaction tRNA(Sec) + L-serine + ATP = L-seryl-tRNA(Sec) + AMP + diphosphate + H(+). It functions in the pathway aminoacyl-tRNA biosynthesis; selenocysteinyl-tRNA(Sec) biosynthesis; L-seryl-tRNA(Sec) from L-serine and tRNA(Sec): step 1/1. Its function is as follows. Catalyzes the attachment of serine to tRNA(Ser). Is also able to aminoacylate tRNA(Sec) with serine, to form the misacylated tRNA L-seryl-tRNA(Sec), which will be further converted into selenocysteinyl-tRNA(Sec). The chain is Serine--tRNA ligase from Alteromonas mediterranea (strain DSM 17117 / CIP 110805 / LMG 28347 / Deep ecotype).